The following is a 158-amino-acid chain: NAD(P)H-quinone oxidoreductase subunit J, chloroplastic (158 aa).

Belongs to the complex I 30 kDa subunit family. In terms of assembly, NDH is composed of at least 16 different subunits, 5 of which are encoded in the nucleus.

The protein resides in the plastid. The protein localises to the chloroplast thylakoid membrane. It carries out the reaction a plastoquinone + NADH + (n+1) H(+)(in) = a plastoquinol + NAD(+) + n H(+)(out). The enzyme catalyses a plastoquinone + NADPH + (n+1) H(+)(in) = a plastoquinol + NADP(+) + n H(+)(out). NDH shuttles electrons from NAD(P)H:plastoquinone, via FMN and iron-sulfur (Fe-S) centers, to quinones in the photosynthetic chain and possibly in a chloroplast respiratory chain. The immediate electron acceptor for the enzyme in this species is believed to be plastoquinone. Couples the redox reaction to proton translocation, and thus conserves the redox energy in a proton gradient. In Fagopyrum esculentum subsp. ancestrale (Wild buckwheat), this protein is NAD(P)H-quinone oxidoreductase subunit J, chloroplastic.